The sequence spans 228 residues: MENQKILVAKYAIDHYIKSNMNLGIGTGTTIYYAIKYLSEKIKSGSLKNLKFYTTSSDTKYLLSKEQIPYESNFSKLNKNLDIAIDGADEILLEKKSLIKGMGGAHLMEKVIAYNSETLLIIADETKIVKKLGTKMPIPIEVAQNAVGFIMTRLEEMNLEATLRICKEKKGPTITDNNNYILDVKMHVENPEGTEKYFKLFPGILEIGIFNHKNTRIVYYQDKQIKEA.

Substrate is bound by residues 27-30, 86-89, and 100-103; these read TGTT, DGAD, and KGMG. The active-site Proton acceptor is the Glu109. Position 127 (Lys127) interacts with substrate.

Belongs to the ribose 5-phosphate isomerase family. In terms of assembly, homodimer.

The enzyme catalyses aldehydo-D-ribose 5-phosphate = D-ribulose 5-phosphate. Its pathway is carbohydrate degradation; pentose phosphate pathway; D-ribose 5-phosphate from D-ribulose 5-phosphate (non-oxidative stage): step 1/1. Catalyzes the reversible conversion of ribose-5-phosphate to ribulose 5-phosphate. This Borreliella burgdorferi (strain ZS7) (Borrelia burgdorferi) protein is Ribose-5-phosphate isomerase A.